We begin with the raw amino-acid sequence, 368 residues long: Seven-bladed beta-propeller protein MSMEG_5308 (368 aa).

In terms of assembly, interacts with MmpL3 and TtfA.

The protein resides in the cell septum. It localises to the cell tip. In terms of biological role, stabilizes the MmpL3/TtfA trehalose monomycolate (TMM) transport complex under stress conditions. This chain is Seven-bladed beta-propeller protein MSMEG_5308, found in Mycolicibacterium smegmatis (strain ATCC 700084 / mc(2)155) (Mycobacterium smegmatis).